The following is a 436-amino-acid chain: Glutamate-1-semialdehyde 2,1-aminomutase 2 (436 aa).

K271 bears the N6-(pyridoxal phosphate)lysine mark.

It belongs to the class-III pyridoxal-phosphate-dependent aminotransferase family. HemL subfamily. In terms of assembly, homodimer. Pyridoxal 5'-phosphate is required as a cofactor.

Its subcellular location is the cytoplasm. It catalyses the reaction (S)-4-amino-5-oxopentanoate = 5-aminolevulinate. It functions in the pathway porphyrin-containing compound metabolism; protoporphyrin-IX biosynthesis; 5-aminolevulinate from L-glutamyl-tRNA(Glu): step 2/2. In Exiguobacterium sibiricum (strain DSM 17290 / CCUG 55495 / CIP 109462 / JCM 13490 / 255-15), this protein is Glutamate-1-semialdehyde 2,1-aminomutase 2.